A 364-amino-acid chain; its full sequence is Protein leg1a (364 aa).

Residues 1–22 (MSEMGFLRSVAAVLLLAVFSHA) form the signal peptide. Asparagine 70 carries N-linked (GlcNAc...) asparagine glycosylation.

The protein belongs to the LEG1 family. As to expression, detected in all tissues tested, with the highest levels in serum (at protein level). At mRNA level, only expressed in liver.

The protein resides in the secreted. In terms of biological role, important for early development of liver, exocrine pancreas and intestine, probably through cell cycle regulation. In liver, its function is partially redundant with leg1b function. The sequence is that of Protein leg1a from Danio rerio (Zebrafish).